The chain runs to 102 residues: Small ribosomal subunit protein uS10 (102 aa).

The protein belongs to the universal ribosomal protein uS10 family. Part of the 30S ribosomal subunit.

Its function is as follows. Involved in the binding of tRNA to the ribosomes. The sequence is that of Small ribosomal subunit protein uS10 from Thermosipho africanus (strain TCF52B).